The following is a 1079-amino-acid chain: Lon protease homolog, mitochondrial (1079 aa).

Residues 1-60 (MLRPRTYVRKLAWRCPRKSQLGLRLATSVSSHKSLPLPMNFDISHSQSAFRAYQDIIHRN) constitute a mitochondrion transit peptide. Residues 61-116 (KSVGDDEPSQRSENENNPSESDKDSNQDPETPKKDKESENDKEPEKEKDIENDNKV) show a composition bias toward basic and acidic residues. Disordered stretches follow at residues 61-158 (KSVG…VDPV) and 262-285 (LTTP…ESFP). Over residues 117-131 (SSESNENVTLASSNT) the composition is skewed to polar residues. A compositionally biased stretch (low complexity) spans 132–143 (GGAAPPNGNNNG). In terms of domain architecture, Lon N-terminal spans 165 to 391 (LLAIPMKDRP…RALELLKVEL (227 aa)). The span at 262 to 281 (LTTPSSEKEAKSEEPSKEDA) shows a compositional bias: basic and acidic residues. Residue 543 to 550 (GPPGTGKT) coordinates ATP. Basic and acidic residues predominate over residues 756–765 (ALDSSKEKEG). Residues 756-832 (ALDSSKEKEG…SEEDQQPEPK (77 aa)) form a disordered region. Positions 768–779 (ASSEEANVNSES) are enriched in low complexity. The span at 780-802 (TKSNTSQAEPVAESSTDISTKSK) shows a compositional bias: polar residues. Positions 803 to 818 (VASEKIETKEKKETNK) are enriched in basic and acidic residues. Residues 865 to 1053 (FPPPGVATGL…QEVFDKIFPN (189 aa)) form the Lon proteolytic domain. Catalysis depends on residues serine 959 and lysine 1002.

Belongs to the peptidase S16 family. Homohexamer or homoheptamer. Organized in a ring with a central cavity.

It localises to the mitochondrion matrix. The catalysed reaction is Hydrolysis of proteins in presence of ATP.. Its function is as follows. ATP-dependent serine protease that mediates the selective degradation of misfolded, unassembled or oxidatively damaged polypeptides as well as certain short-lived regulatory proteins in the mitochondrial matrix. May also have a chaperone function in the assembly of inner membrane protein complexes. Participates in the regulation of mitochondrial gene expression and in the maintenance of the integrity of the mitochondrial genome. Binds to mitochondrial DNA in a site-specific manner. The protein is Lon protease homolog, mitochondrial of Debaryomyces hansenii (strain ATCC 36239 / CBS 767 / BCRC 21394 / JCM 1990 / NBRC 0083 / IGC 2968) (Yeast).